The primary structure comprises 85 residues: Large ribosomal subunit protein bL27 (85 aa).

The segment at 1-20 (MAHKKAGGSTRNGRDSEAKR) is disordered.

Belongs to the bacterial ribosomal protein bL27 family.

This chain is Large ribosomal subunit protein bL27, found in Citrobacter koseri (strain ATCC BAA-895 / CDC 4225-83 / SGSC4696).